The sequence spans 206 residues: ATP-dependent Clp protease proteolytic subunit 1 (206 aa).

Serine 103 functions as the Nucleophile in the catalytic mechanism. Histidine 128 is a catalytic residue.

Belongs to the peptidase S14 family. Fourteen ClpP subunits assemble into 2 heptameric rings which stack back to back to give a disk-like structure with a central cavity, resembling the structure of eukaryotic proteasomes.

The protein resides in the cytoplasm. The catalysed reaction is Hydrolysis of proteins to small peptides in the presence of ATP and magnesium. alpha-casein is the usual test substrate. In the absence of ATP, only oligopeptides shorter than five residues are hydrolyzed (such as succinyl-Leu-Tyr-|-NHMec, and Leu-Tyr-Leu-|-Tyr-Trp, in which cleavage of the -Tyr-|-Leu- and -Tyr-|-Trp bonds also occurs).. Functionally, cleaves peptides in various proteins in a process that requires ATP hydrolysis. Has a chymotrypsin-like activity. Plays a major role in the degradation of misfolded proteins. The chain is ATP-dependent Clp protease proteolytic subunit 1 from Protochlamydia amoebophila (strain UWE25).